A 465-amino-acid chain; its full sequence is D(1C) dopamine receptor (465 aa).

The Extracellular portion of the chain corresponds to 1 to 30; the sequence is MENFSIFNVTVNVWHADLDVGNSDLSLRAL. Residues asparagine 3 and asparagine 8 are each glycosylated (N-linked (GlcNAc...) asparagine). A helical transmembrane segment spans residues 31 to 54; it reads TGLLLSLLILSTLLGNTLVCLAVI. The Cytoplasmic portion of the chain corresponds to 55–65; the sequence is KFRHLRSKVTN. A helical membrane pass occupies residues 66-92; the sequence is FFVISLAVSDLFVALLVMPWKAVTEVA. At 93 to 101 the chain is on the extracellular side; sequence GFWVFGDFC. Cysteine 101 and cysteine 187 are disulfide-bonded. The chain crosses the membrane as a helical span at residues 102–124; it reads DTWVAFDIMCSTASILNLCIISL. Topologically, residues 125-143 are cytoplasmic; sequence DRYWAIASPFRYERKMTQR. Residues 144 to 168 traverse the membrane as a helical segment; the sequence is VAFIMIGVAWTLSILISFIPVQLSW. Residues 169 to 193 are Extracellular-facing; that stretch reads HKSHEADEELNGVNHTENCDSSLNR. Residues 194 to 219 form a helical membrane-spanning segment; sequence TYAISSSLISFYIPVVIMIGTYTRIY. At 220–264 the chain is on the cytoplasmic side; sequence RIAQTQIRRISSLERAVEHAQRCSSRLSNENSLKTSFRKETKVLK. The helical transmembrane segment at 265 to 291 threads the bilayer; it reads TLSIIMGVFVFCWLPFFVLNCMIPFCH. Over 292 to 309 the chain is Extracellular; it reads MNLPGQNEPEPPCVSETT. The chain crosses the membrane as a helical span at residues 310 to 334; that stretch reads FNIFVWFGWANSSLNPVIYAFNADF. The Cytoplasmic segment spans residues 335–465; it reads RKAFTTILGC…EDRHYTTKLY (131 aa). Residue cysteine 344 is the site of S-palmitoyl cysteine attachment.

This sequence belongs to the G-protein coupled receptor 1 family. As to expression, brain and kidney.

Its subcellular location is the cell membrane. The protein localises to the cell projection. The protein resides in the cilium membrane. This is one of the five types (D1 to D5) of receptors for dopamine. The activity of this receptor is mediated by G proteins which activate adenylyl cyclase. The chain is D(1C) dopamine receptor (drd1c) from Xenopus laevis (African clawed frog).